The primary structure comprises 324 residues: Tyrosine--tRNA ligase (324 aa).

Tyrosine 36 is an L-tyrosine binding site. The short motif at 41–49 is the 'HIGH' region element; sequence PSGKVHLGH. L-tyrosine contacts are provided by tyrosine 158, glutamine 162, aspartate 165, and glutamine 180. The 'KMSKS' region motif lies at 215 to 219; sequence KMSSS. An ATP-binding site is contributed by serine 218.

The protein belongs to the class-I aminoacyl-tRNA synthetase family. TyrS type 3 subfamily. In terms of assembly, homodimer.

The protein localises to the cytoplasm. The enzyme catalyses tRNA(Tyr) + L-tyrosine + ATP = L-tyrosyl-tRNA(Tyr) + AMP + diphosphate + H(+). In terms of biological role, catalyzes the attachment of tyrosine to tRNA(Tyr) in a two-step reaction: tyrosine is first activated by ATP to form Tyr-AMP and then transferred to the acceptor end of tRNA(Tyr). This chain is Tyrosine--tRNA ligase, found in Methanopyrus kandleri (strain AV19 / DSM 6324 / JCM 9639 / NBRC 100938).